The following is a 513-amino-acid chain: Light-independent protochlorophyllide reductase subunit B (513 aa).

Asp36 provides a ligand contact to [4Fe-4S] cluster. The active-site Proton donor is Asp274. 409–410 (GL) provides a ligand contact to substrate. Residues 426-457 (DAAGPSHHGGHSPKPQAAEPAPQAAPQPENTG) are disordered. A compositionally biased stretch (low complexity) spans 440–454 (PQAAEPAPQAAPQPE).

It belongs to the ChlB/BchB/BchZ family. In terms of assembly, protochlorophyllide reductase is composed of three subunits; BchL, BchN and BchB. Forms a heterotetramer of two BchB and two BchN subunits. The cofactor is [4Fe-4S] cluster.

The catalysed reaction is chlorophyllide a + oxidized 2[4Fe-4S]-[ferredoxin] + 2 ADP + 2 phosphate = protochlorophyllide a + reduced 2[4Fe-4S]-[ferredoxin] + 2 ATP + 2 H2O. It participates in porphyrin-containing compound metabolism; bacteriochlorophyll biosynthesis (light-independent). In terms of biological role, component of the dark-operative protochlorophyllide reductase (DPOR) that uses Mg-ATP and reduced ferredoxin to reduce ring D of protochlorophyllide (Pchlide) to form chlorophyllide a (Chlide). This reaction is light-independent. The NB-protein (BchN-BchB) is the catalytic component of the complex. This is Light-independent protochlorophyllide reductase subunit B from Roseobacter denitrificans (strain ATCC 33942 / OCh 114) (Erythrobacter sp. (strain OCh 114)).